Consider the following 1140-residue polypeptide: Protein shank (1140 aa).

ANK repeat units lie at residues 144 to 174, 178 to 207, 211 to 242, 246 to 275, 279 to 309, and 312 to 341; these read QGET…HVDF, EGQT…SPNY, IGLT…DIGV, HGNH…QIDA, NGNS…HLAV, and QGQT…KSSV. Residues 337–412 are disordered; sequence PKSSVPYRGT…ITPSEYGTMR (76 aa). Residues 351-364 are compositionally biased toward basic residues; sequence TRRRLSSTITRRRS. Residues 388-412 show a composition bias toward low complexity; sequence SAAPSPSPSRSSRTTITPSEYGTMR. The PDZ domain maps to 436-529; sequence ILVIPRGVKG…TITLKVITVD (94 aa). Composition is skewed to polar residues over residues 640–657 and 687–704; these read DQES…NSVS and TSTF…QLSR. Disordered regions lie at residues 640–673, 687–856, 875–902, 961–993, and 1008–1028; these read DQES…ASSA, TSTF…AASA, QLKK…STTD, KDSG…HSPN, and YGQK…SSTV. 2 stretches are compositionally biased toward low complexity: residues 761–775 and 784–793; these read QHQN…QQHP and PQPIQQQQSS. 2 stretches are compositionally biased toward pro residues: residues 794–806 and 823–847; these read IPPP…PPHC and VPPP…PPPG. Over residues 964 to 974 the composition is skewed to polar residues; that stretch reads GYTSSRTSLEP. Positions 977-988 are enriched in basic and acidic residues; sequence SEEKDHRPHFSL. The segment covering 1015–1028 has biased composition (low complexity); sequence SVASSSTASSSSTV. The 63-residue stretch at 1078–1140 folds into the SAM domain; it reads WSVDDVIGWL…IESALRGLLQ (63 aa).

Belongs to the SHANK family. In terms of assembly, interacts (via PDZ domain) with egl-19 (via C-terminus). As to expression, expressed in the pharynx, pharyngeal-intestinal valve, intestine, rectal epithelial cells, tail neurons, nerve cord and sperm.

It is found in the cell projection. The protein resides in the pseudopodium. It localises to the cytoplasmic vesicle. The protein localises to the postsynaptic density. Functionally, scaffold protein that most likely acts in the postsynaptic density (PSD) of excitatory synapses which orchestrates synapse formation and maintenance at neuromuscular junctions. Associates with and trafficks the L-type calcium channel egl-19 to the cell surface of body wall muscles to ensure the function of the calcium channel and therefore maintain the Ca(2+) current density. The maintenance of Ca(2+) also allows for the downstream regulation of Ca(2+)-induced expression of genes such as gem-4. Plays a role in the regulation of the defecation cycle, and this may be in association with the inositol trisphosphate (IP3) receptor itr-1, which in turn mediates periodic calcium release and muscle contractions. Required for normal fertility and pharyngeal pumping. The sequence is that of Protein shank from Caenorhabditis elegans.